Reading from the N-terminus, the 1204-residue chain is Cingulin (1204 aa).

The interval 7-359 (MAEPRGPVDH…VMMSSGSSKA (353 aa)) is head. Residues 25 to 48 (EPVSGAEMGTLRRGGRRPAKDARA) are disordered. Positions 48-62 (ASTYGVAVRVQGIAG) match the ZIM motif. The tract at residues 54-67 (AVRVQGIAGQPFVV) is interaction with TJP1/ZO1. Residues 68–269 (LNSGEKGGDS…SPLSGLSRAR (202 aa)) are disordered. Ser95, Ser96, Ser98, Ser135, Ser137, Ser140, Ser155, and Ser165 each carry phosphoserine. Over residues 126 to 140 (TQWNGKLLRSQSQAS) the composition is skewed to polar residues. The segment covering 166 to 190 (PGSTIDTAPLSSVDSLINKFDSQLR) has biased composition (polar residues). The span at 207–231 (EQRKRSKSLDSRLPRDTLEERERQS) shows a compositional bias: basic and acidic residues. Residues Ser214, Ser217, Ser260, Ser278, Ser340, and Ser353 each carry the phosphoserine modification. The stretch at 360–1161 (VAGQGELTRK…SLEKDSWRKA (802 aa)) forms a coiled coil. Lys581 is subject to N6-acetyllysine. A disordered region spans residues 1156–1182 (DSWRKASRSAAESTLKHEGLSSDEEFD). The tract at residues 1162-1204 (SRSAAESTLKHEGLSSDEEFDGVYDPSSIASLLTESNLQTSSC) is tail. Residues Ser1176 and Ser1177 each carry the phosphoserine modification.

Belongs to the cingulin family. As to quaternary structure, homodimer. Interacts with TJP1/ZO1 and SPEF1.

It is found in the cell junction. It localises to the tight junction. Its function is as follows. Probably plays a role in the formation and regulation of the tight junction (TJ) paracellular permeability barrier. This chain is Cingulin, found in Callithrix jacchus (White-tufted-ear marmoset).